Here is a 346-residue protein sequence, read N- to C-terminus: Protein RecA (346 aa).

Residue 65 to 72 (GPESSGKT) participates in ATP binding.

It belongs to the RecA family.

Its subcellular location is the cytoplasm. In terms of biological role, can catalyze the hydrolysis of ATP in the presence of single-stranded DNA, the ATP-dependent uptake of single-stranded DNA by duplex DNA, and the ATP-dependent hybridization of homologous single-stranded DNAs. It interacts with LexA causing its activation and leading to its autocatalytic cleavage. The chain is Protein RecA from Pseudomonas aeruginosa (strain UCBPP-PA14).